The following is a 344-amino-acid chain: L-rhamnose-proton symporter (344 aa).

The next 10 helical transmembrane spans lie at 4 to 24 (AITM…CFYA), 38 to 58 (WSVG…ALLL), 68 to 88 (FNLS…IGNI), 101 to 121 (MGIG…TPII), 137 to 157 (TLLG…AGQL), 175 to 195 (LLLA…MNAA), 214 to 234 (LPSY…FCFI), 259 to 279 (ILLS…YAWG), 290 to 310 (MSWM…GLVL), and 321 to 341 (VAVL…VGLG).

This sequence belongs to the L-rhamnose transporter (TC 2.A.7.6) family.

Its subcellular location is the cell inner membrane. It carries out the reaction L-rhamnopyranose(in) + H(+)(in) = L-rhamnopyranose(out) + H(+)(out). In terms of biological role, uptake of L-rhamnose across the cytoplasmic membrane with the concomitant transport of protons into the cell (symport system). The chain is L-rhamnose-proton symporter from Salmonella agona (strain SL483).